The sequence spans 137 residues: Basic phospholipase A2 homolog Pgo-K49 (137 aa).

Residues 1–16 (MRTLLIVAVLLVGVEG) form the signal peptide. Intrachain disulfides connect C42–C131, C44–C60, C59–C111, C65–C137, C66–C104, C73–C97, and C91–C102. The tract at residues 121–133 (KKYKIHMKFFCKK) is important for membrane-damaging activities in eukaryotes and bacteria; heparin-binding.

As to expression, expressed by the venom gland.

Its subcellular location is the secreted. In terms of biological role, snake venom phospholipase A2 homolog that lacks enzymatic activity. Is myotoxic. A model of myotoxic mechanism has been proposed: an apo Lys49-PLA2 is activated by the entrance of a hydrophobic molecule (e.g. fatty acid) at the hydrophobic channel of the protein leading to a reorientation of a monomer. This reorientation causes a transition between 'inactive' to 'active' states, causing alignment of C-terminal and membrane-docking sites (MDoS) side-by-side and putting the membrane-disruption sites (MDiS) in the same plane, exposed to solvent and in a symmetric position for both monomers. The MDoS region stabilizes the toxin on membrane by the interaction of charged residues with phospholipid head groups. Subsequently, the MDiS region destabilizes the membrane with penetration of hydrophobic residues. This insertion causes a disorganization of the membrane, allowing an uncontrolled influx of ions (i.e. calcium and sodium), and eventually triggering irreversible intracellular alterations and cell death. The polypeptide is Basic phospholipase A2 homolog Pgo-K49 (Cerrophidion godmani (Porthidium godmani)).